The sequence spans 97 residues: YcgL domain-containing protein PSPPH_1548 (97 aa).

A YcgL domain is found at arginine 3–proline 87.

This chain is YcgL domain-containing protein PSPPH_1548, found in Pseudomonas savastanoi pv. phaseolicola (strain 1448A / Race 6) (Pseudomonas syringae pv. phaseolicola (strain 1448A / Race 6)).